A 640-amino-acid polypeptide reads, in one-letter code: MSGQSLTDRITAAQHSVTGSAVSKTVCKATTHEIMGPKKKHLDYLIQCTNEMNVNIPQLADSLFERTTNSSWVVVFKSLITTHHLMVYGNERFIQYLASRNTLFNLSNFLDKSGLQGYDMSTFIRRYSRYLNEKAVSYRQVAFDFTKVKRGADGVMRTMNTEKLLKTVPIIQNQMDALLDFNVNSNELTNGVINAAFMLLFKDAIRLFAAYNEGIINLLEKYFDMKKNQCKEGLDIYKKFLTRMTRISEFLKVAEQVGIDRGDIPDLSQAPSSLLDALEQHLASLEGKKIKDSTAASRATTLSNAVSSLASTGLSLTKVDEREKQAALEEEQARLKALKEQRLKELAKKPHTSLTTAASPVSTSAGGIMTAPAIDIFSTPSSSNSTSKLPNDLLDLQQPTFHPSVHAMSAAPQVASTWGDAVDDAIPSLNPFLTKSSGDVHLPISSDVSTFTTRTPTHEMFVGFSPSPVTQPHPSAGLNVDFESVFGNKSTNVAVDSGGGLLKPTVASQNQSLPVAKLPPNKLVSDDLDSSLANLVGNLGIGNGTTKNDVSCSQPGEKKLTGGSNWQPKVAPTTAWSAATMAPPVMAYPATTPTGMIGYGIPPQMGSVPVMTQPTLIYSQPVMRPPNPFGPVPGAQIQFM.

Position 2 is an N-acetylserine (serine 2). Residues 14–145 enclose the ENTH domain; the sequence is QHSVTGSAVS…VSYRQVAFDF (132 aa). Residues serine 16 and serine 20 each carry the phosphoserine modification. An interaction with PIMREG region spans residues 221–294; it reads KYFDMKKNQC…LEGKKIKDST (74 aa). A Glycyl lysine isopeptide (Lys-Gly) (interchain with G-Cter in SUMO2) cross-link involves residue lysine 238. Serine 303 and serine 315 each carry phosphoserine. The tract at residues 543 to 568 is disordered; the sequence is NGTTKNDVSCSQPGEKKLTGGSNWQP. Residues 544–554 are compositionally biased toward polar residues; sequence GTTKNDVSCSQ.

It belongs to the PICALM/SNAP91 family. As to quaternary structure, binds to clathrin; involves primarily the C-terminal sequences, but the full-length protein is required for full binding capacity. Binds phosphatidylinositol 4,5- bisphosphate. Interacts with PIMREG; this interaction may change the subcellular location into the nucleus. Interacts with AP2A1 (via its alpha-appendage domain). Interacts (via N-terminus) with VAMP2; VAMP3; VAMP7 and VAMP8 (Via N-terminus). Interacts with LC3/MAP1LC3A. In terms of tissue distribution, isoform 2 was found in most tissues examined. Isoform 1 has an overlapping expression pattern but is absent from lung, heart and pancreas. Both isoforms are widely expressed in the brain, higher levels are seen in hippocampus, dentate gyrus, medial habenula nucleus and cerebellar granule cells.

It is found in the cell membrane. The protein localises to the membrane. It localises to the clathrin-coated pit. The protein resides in the golgi apparatus. Its subcellular location is the cytoplasmic vesicle. It is found in the clathrin-coated vesicle. The protein localises to the nucleus. Functionally, cytoplasmic adapter protein that plays a critical role in clathrin-mediated endocytosis which is important in processes such as internalization of cell receptors, synaptic transmission or removal of apoptotic cells. Recruits AP-2 and attaches clathrin triskelions to the cytoplasmic side of plasma membrane leading to clathrin-coated vesicles (CCVs) assembly. Furthermore, regulates clathrin-coated vesicle size and maturation by directly sensing and driving membrane curvature. In addition to binding to clathrin, mediates the endocytosis of small R-SNARES (Soluble NSF Attachment Protein REceptors) between plasma membranes and endosomes including VAMP2, VAMP3, VAMP4, VAMP7 or VAMP8. In turn, PICALM-dependent SNARE endocytosis is required for the formation and maturation of autophagic precursors. Modulates thereby autophagy and the turnover of autophagy substrates such as MAPT/TAU or amyloid precursor protein cleaved C-terminal fragment (APP-CTF). The sequence is that of Phosphatidylinositol-binding clathrin assembly protein (Picalm) from Rattus norvegicus (Rat).